A 248-amino-acid chain; its full sequence is MAGHSQFKNIMHRKGRVDAVRSKVFGKLAREITVAAKLGTPDPAMNPRLRAAILAARAENMPKDNIERAIKKAAGADGENYEDIRYEGYGPGGAALIVEAQTDNRNRTASDVRSAFTKSGGSLAETGAVAFMFDRVGVIAYPASVADADTMLEAAIEAGADDVSSGEDGHEVICAQDSYGEVTKALEARFGEPARTGLIWKAQNTINVDDETGEKLIRLVEVIEDQDDVQHVYVNFALSDALVAKLQA.

Belongs to the TACO1 family.

It is found in the cytoplasm. This chain is Probable transcriptional regulatory protein Mrad2831_3553, found in Methylobacterium radiotolerans (strain ATCC 27329 / DSM 1819 / JCM 2831 / NBRC 15690 / NCIMB 10815 / 0-1).